Consider the following 263-residue polypeptide: Ret finger protein-like 4B (263 aa).

An RING-type zinc finger spans residues 11-53 (CPVCLDFFSCSISLSCTHVFCFDCIQRYILENHDFRAMCPLCR). Positions 76–263 (HNSRLEQSLH…ESGNVLTICP (188 aa)) constitute a B30.2/SPRY domain.

This chain is Ret finger protein-like 4B (RFPL4B), found in Homo sapiens (Human).